We begin with the raw amino-acid sequence, 263 residues long: Hydroxyethylthiazole kinase 2 (263 aa).

Position 42 (Met42) interacts with substrate. The ATP site is built by Lys118 and Thr164. Position 191 (Gly191) interacts with substrate.

This sequence belongs to the Thz kinase family. The cofactor is Mg(2+).

The enzyme catalyses 5-(2-hydroxyethyl)-4-methylthiazole + ATP = 4-methyl-5-(2-phosphooxyethyl)-thiazole + ADP + H(+). Its pathway is cofactor biosynthesis; thiamine diphosphate biosynthesis; 4-methyl-5-(2-phosphoethyl)-thiazole from 5-(2-hydroxyethyl)-4-methylthiazole: step 1/1. Catalyzes the phosphorylation of the hydroxyl group of 4-methyl-5-beta-hydroxyethylthiazole (THZ). In Clostridium botulinum (strain Loch Maree / Type A3), this protein is Hydroxyethylthiazole kinase 2.